The chain runs to 193 residues: MKSSAQLCMEARNYNFNAAAPLRLYLATCVRLVEEAQAAAQADDVARAYMLYVRYLDLCMHQLSGHREVQQPVTDAERLSRDEYEQLLRLEVPAVLRLTEELKSAVDLRHERGRASLARSVVPEAGRGEHSRQEVQLPPSFDEERFNRTVQWFLAAGRSMSLPVSAEEPAVREVFSYPELPKLSMAAESWAPS.

It belongs to the RFU1 family.

The protein resides in the endosome. In terms of biological role, inhibitor of the DOA4 deubiquitinase involved in the regulation of protein degradation by the proteasome and maintenance of a normal level of free ubiquitin. The chain is Regulator of free ubiquitin chains 1 (RFU1) from Eremothecium gossypii (strain ATCC 10895 / CBS 109.51 / FGSC 9923 / NRRL Y-1056) (Yeast).